The following is a 359-amino-acid chain: Phosphoserine aminotransferase (359 aa).

Arg41 contacts L-glutamate. Pyridoxal 5'-phosphate-binding positions include 75–76 (AS), Trp101, Thr151, Asp171, and Gln194. The residue at position 195 (Lys195) is an N6-(pyridoxal phosphate)lysine. Position 236–237 (236–237 (NT)) interacts with pyridoxal 5'-phosphate.

This sequence belongs to the class-V pyridoxal-phosphate-dependent aminotransferase family. SerC subfamily. As to quaternary structure, homodimer. It depends on pyridoxal 5'-phosphate as a cofactor.

The protein localises to the cytoplasm. It carries out the reaction O-phospho-L-serine + 2-oxoglutarate = 3-phosphooxypyruvate + L-glutamate. The enzyme catalyses 4-(phosphooxy)-L-threonine + 2-oxoglutarate = (R)-3-hydroxy-2-oxo-4-phosphooxybutanoate + L-glutamate. Its pathway is amino-acid biosynthesis; L-serine biosynthesis; L-serine from 3-phospho-D-glycerate: step 2/3. It functions in the pathway cofactor biosynthesis; pyridoxine 5'-phosphate biosynthesis; pyridoxine 5'-phosphate from D-erythrose 4-phosphate: step 3/5. Catalyzes the reversible conversion of 3-phosphohydroxypyruvate to phosphoserine and of 3-hydroxy-2-oxo-4-phosphonooxybutanoate to phosphohydroxythreonine. This Thiobacillus denitrificans (strain ATCC 25259 / T1) protein is Phosphoserine aminotransferase.